The chain runs to 109 residues: Ferredoxin (109 aa).

2 4Fe-4S ferredoxin-type domains span residues 2-30 and 31-60; these read TYVVTDECVKCKYTDCVEVCPVDCFYEGE and FMLVINPDECIDCGVCVPDCPIDAIKPESP. Residues Cys-9 and Cys-17 each coordinate [3Fe-4S] cluster. 4 residues coordinate [4Fe-4S] cluster: Cys-21, Cys-40, Cys-43, and Cys-46. Cys-50 contributes to the [3Fe-4S] cluster binding site.

The cofactor is [4Fe-4S] cluster. It depends on [3Fe-4S] cluster as a cofactor.

In terms of biological role, ferredoxins are iron-sulfur proteins that transfer electrons in a wide variety of metabolic reactions. The chain is Ferredoxin (fdxA) from Rickettsia prowazekii (strain Madrid E).